Here is a 364-residue protein sequence, read N- to C-terminus: Dihydroorotate dehydrogenase (quinone) (364 aa).

Residues 61-65 (AGFDK) and threonine 85 contribute to the FMN site. Lysine 65 lines the substrate pocket. Substrate is bound at residue 110–114 (NRMGF). Residues asparagine 139 and asparagine 170 each contribute to the FMN site. Asparagine 170 contributes to the substrate binding site. Serine 173 (nucleophile) is an active-site residue. Asparagine 175 is a binding site for substrate. FMN-binding residues include lysine 214 and alanine 242. Position 243 to 244 (243 to 244 (NT)) interacts with substrate. FMN-binding positions include glycine 266, glycine 295, and 316 to 317 (YS).

This sequence belongs to the dihydroorotate dehydrogenase family. Type 2 subfamily. In terms of assembly, monomer. It depends on FMN as a cofactor.

The protein localises to the cell membrane. It catalyses the reaction (S)-dihydroorotate + a quinone = orotate + a quinol. The protein operates within pyrimidine metabolism; UMP biosynthesis via de novo pathway; orotate from (S)-dihydroorotate (quinone route): step 1/1. In terms of biological role, catalyzes the conversion of dihydroorotate to orotate with quinone as electron acceptor. The protein is Dihydroorotate dehydrogenase (quinone) of Rhodopseudomonas palustris (strain HaA2).